Here is a 590-residue protein sequence, read N- to C-terminus: Aspartate--tRNA(Asp/Asn) ligase (590 aa).

Glu172 lines the L-aspartate pocket. Positions 196–199 are aspartate; the sequence is QLFK. Arg218 is an L-aspartate binding site. Residues 218 to 220 and Gln227 contribute to the ATP site; that span reads RDE. His449 is a binding site for L-aspartate. ATP is bound at residue Glu484. Arg491 lines the L-aspartate pocket. 536–539 is a binding site for ATP; the sequence is GIDR.

It belongs to the class-II aminoacyl-tRNA synthetase family. Type 1 subfamily. In terms of assembly, homodimer.

It localises to the cytoplasm. It catalyses the reaction tRNA(Asx) + L-aspartate + ATP = L-aspartyl-tRNA(Asx) + AMP + diphosphate. Aspartyl-tRNA synthetase with relaxed tRNA specificity since it is able to aspartylate not only its cognate tRNA(Asp) but also tRNA(Asn). Reaction proceeds in two steps: L-aspartate is first activated by ATP to form Asp-AMP and then transferred to the acceptor end of tRNA(Asp/Asn). The chain is Aspartate--tRNA(Asp/Asn) ligase from Francisella tularensis subsp. tularensis (strain SCHU S4 / Schu 4).